The chain runs to 261 residues: uncharacterized protein (261 aa).

This is an uncharacterized protein from Mycobacterium tuberculosis (strain CDC 1551 / Oshkosh).